A 259-amino-acid chain; its full sequence is Tryptophan synthase alpha chain (259 aa).

Active-site proton acceptor residues include Glu-35 and Asp-46.

Belongs to the TrpA family. As to quaternary structure, tetramer of two alpha and two beta chains.

It catalyses the reaction (1S,2R)-1-C-(indol-3-yl)glycerol 3-phosphate + L-serine = D-glyceraldehyde 3-phosphate + L-tryptophan + H2O. It participates in amino-acid biosynthesis; L-tryptophan biosynthesis; L-tryptophan from chorismate: step 5/5. Its function is as follows. The alpha subunit is responsible for the aldol cleavage of indoleglycerol phosphate to indole and glyceraldehyde 3-phosphate. This Methanococcus maripaludis (strain C7 / ATCC BAA-1331) protein is Tryptophan synthase alpha chain.